Consider the following 307-residue polypeptide: Small ribosomal subunit biogenesis GTPase RsgA (307 aa).

Residues 1–21 (MPSEHPFSDGIPTPNPKETMN) are disordered. Positions 85 to 242 (RQDAWKTKLI…LIDSPGLQEF (158 aa)) constitute a CP-type G domain. GTP contacts are provided by residues 135 to 138 (NKAD) and 184 to 192 (GQSGMGKST). Zn(2+) is bound by residues C266, C271, H273, and C279.

The protein belongs to the TRAFAC class YlqF/YawG GTPase family. RsgA subfamily. As to quaternary structure, monomer. Associates with 30S ribosomal subunit, binds 16S rRNA. Zn(2+) serves as cofactor.

The protein localises to the cytoplasm. One of several proteins that assist in the late maturation steps of the functional core of the 30S ribosomal subunit. Helps release RbfA from mature subunits. May play a role in the assembly of ribosomal proteins into the subunit. Circularly permuted GTPase that catalyzes slow GTP hydrolysis, GTPase activity is stimulated by the 30S ribosomal subunit. This Neisseria meningitidis serogroup B (strain ATCC BAA-335 / MC58) protein is Small ribosomal subunit biogenesis GTPase RsgA.